Here is a 151-residue protein sequence, read N- to C-terminus: Large ribosomal subunit protein bL9 (151 aa).

This sequence belongs to the bacterial ribosomal protein bL9 family.

Its function is as follows. Binds to the 23S rRNA. This is Large ribosomal subunit protein bL9 from Lactobacillus helveticus (strain DPC 4571).